A 293-amino-acid chain; its full sequence is Bifunctional monothiol glutaredoxin-S16, chloroplastic (293 aa).

Residues 1–62 (MAAITISSSL…APSRRRSFFI (62 aa)) constitute a chloroplast transit peptide. A disulfide bond links Cys-123 and Cys-219. The region spanning 194–293 (EELIDRLVKE…ENGELANILN (100 aa)) is the Glutaredoxin domain. Lys-211 serves as a coordination point for glutathione. [2Fe-2S] cluster is bound at residue Cys-219. Residues Arg-251, Phe-263, and 276–277 (CD) contribute to the glutathione site.

The protein belongs to the glutaredoxin family. CGFS subfamily. [2Fe-2S]-bridged holo-homodimer. Interacts in vitro with SUFE1, BOLA1, BOLA2 and BOLA4. Interacts in vivo only with SUFE1, BOLA1 and BOLA4. Interacts with SBP1.

It localises to the plastid. The protein localises to the chloroplast. With respect to regulation, the formation of an intramolecular disulfide bond negatively regulates both the N-terminal endonuclease and the C-terminal glutaredoxin activities. In terms of biological role, may only reduce GSH-thiol disulfides, but not protein disulfides. Participates probably to the maturation of iron-sulfur proteins and to the regulation of the redox state of the BOLA proteins. The GRXS16-BOLA1 heterodimer binds a labile, oxygen sensitive iron-sulfur cluster. Able to cleave linearized DNA in vitro. In Arabidopsis thaliana (Mouse-ear cress), this protein is Bifunctional monothiol glutaredoxin-S16, chloroplastic.